The sequence spans 105 residues: uncharacterized protein (105 aa).

2 disordered regions span residues 29 to 55 (HTRVGVTDPDPRVPPLLPGPAGVTDES) and 72 to 105 (EQRGDRRAVRCEPAGEPPLDDVRTPAAPAVRSGR). Basic and acidic residues predominate over residues 72 to 81 (EQRGDRRAVR).

This is an uncharacterized protein from Streptomyces coelicolor (strain ATCC BAA-471 / A3(2) / M145).